Reading from the N-terminus, the 289-residue chain is Pyridoxal kinase PdxY (289 aa).

Substrate is bound by residues Ser-9 and 44 to 45 (TQ). The ATP site is built by Asp-112, Val-144, Glu-149, and Lys-182. Asp-221 contributes to the substrate binding site.

Belongs to the pyridoxine kinase family. PdxY subfamily. In terms of assembly, homodimer. It depends on Mg(2+) as a cofactor.

The enzyme catalyses pyridoxal + ATP = pyridoxal 5'-phosphate + ADP + H(+). It participates in cofactor metabolism; pyridoxal 5'-phosphate salvage; pyridoxal 5'-phosphate from pyridoxal: step 1/1. Pyridoxal kinase involved in the salvage pathway of pyridoxal 5'-phosphate (PLP). Catalyzes the phosphorylation of pyridoxal to PLP. The sequence is that of Pyridoxal kinase PdxY from Vibrio campbellii (strain ATCC BAA-1116).